The following is a 471-amino-acid chain: Glutamate--tRNA ligase (471 aa).

Positions 9 to 19 (PSPTGYLHVGG) match the 'HIGH' region motif. Residues Cys-98, Cys-100, Cys-125, and His-127 each coordinate Zn(2+). The 'KMSKS' region motif lies at 237–241 (KLSKR). Lys-240 serves as a coordination point for ATP.

This sequence belongs to the class-I aminoacyl-tRNA synthetase family. Glutamate--tRNA ligase type 1 subfamily. As to quaternary structure, monomer. Requires Zn(2+) as cofactor.

The protein localises to the cytoplasm. The catalysed reaction is tRNA(Glu) + L-glutamate + ATP = L-glutamyl-tRNA(Glu) + AMP + diphosphate. In terms of biological role, catalyzes the attachment of glutamate to tRNA(Glu) in a two-step reaction: glutamate is first activated by ATP to form Glu-AMP and then transferred to the acceptor end of tRNA(Glu). The protein is Glutamate--tRNA ligase of Salmonella enteritidis PT4 (strain P125109).